We begin with the raw amino-acid sequence, 356 residues long: GMP reductase (356 aa).

Residues 26–27 (SR), lysine 78, 132–134 (DVA), and 183–184 (IG) each bind NADP(+). 3 residues coordinate K(+): glycine 184, glycine 186, and cysteine 189. The Thioimidate intermediate role is filled by cysteine 189. The Proton donor/acceptor role is filled by threonine 191. Arginine 192 lines the K(+) pocket. GMP is bound by residues 222-224 (DGG), 245-246 (GG), 271-273 (GMS), and 289-293 (RASEG). Residues methionine 272, 288-289 (YR), and 317-320 (SACT) each bind NADP(+).

This sequence belongs to the IMPDH/GMPR family.

The catalysed reaction is IMP + NH4(+) + NADP(+) = GMP + NADPH + 2 H(+). Catalyzes the irreversible NADPH-dependent deamination of GMP to IMP. It functions in the conversion of nucleobase, nucleoside and nucleotide derivatives of G to A nucleotides, and in maintaining the intracellular balance of A and G nucleotides. This chain is GMP reductase, found in Ascaris suum (Pig roundworm).